Reading from the N-terminus, the 434-residue chain is Ribosomal protein uS12 methylthiotransferase RimO (434 aa).

Residues 4–122 enclose the MTTase N-terminal domain; it reads NRVDVITLGC…LISHLGKSYY (119 aa). Cys-13, Cys-51, Cys-85, Cys-146, Cys-150, and Cys-153 together coordinate [4Fe-4S] cluster. The 232-residue stretch at 132–363 folds into the Radical SAM core domain; the sequence is TTPRHYAYLK…MAVQERISAA (232 aa). One can recognise a TRAM domain in the interval 366–434; sequence EAKIGSRLRV…PFDLYARIVD (69 aa).

The protein belongs to the methylthiotransferase family. RimO subfamily. Requires [4Fe-4S] cluster as cofactor.

It localises to the cytoplasm. The enzyme catalyses L-aspartate(89)-[ribosomal protein uS12]-hydrogen + (sulfur carrier)-SH + AH2 + 2 S-adenosyl-L-methionine = 3-methylsulfanyl-L-aspartate(89)-[ribosomal protein uS12]-hydrogen + (sulfur carrier)-H + 5'-deoxyadenosine + L-methionine + A + S-adenosyl-L-homocysteine + 2 H(+). Catalyzes the methylthiolation of an aspartic acid residue of ribosomal protein uS12. The chain is Ribosomal protein uS12 methylthiotransferase RimO from Porphyromonas gingivalis (strain ATCC 33277 / DSM 20709 / CIP 103683 / JCM 12257 / NCTC 11834 / 2561).